The sequence spans 433 residues: 3-phosphoshikimate 1-carboxyvinyltransferase (433 aa).

3-phosphoshikimate contacts are provided by Lys21, Ser22, and Arg26. Lys21 contributes to the phosphoenolpyruvate binding site. Residues Gly96 and Arg124 each coordinate phosphoenolpyruvate. 3-phosphoshikimate contacts are provided by Ser167, Ser168, Gln169, Ser195, Asp310, and Lys337. Gln169 is a phosphoenolpyruvate binding site. Residue Asp310 is the Proton acceptor of the active site. Phosphoenolpyruvate is bound by residues Arg341, Arg384, and Lys410.

It belongs to the EPSP synthase family. As to quaternary structure, monomer.

The protein localises to the cytoplasm. The catalysed reaction is 3-phosphoshikimate + phosphoenolpyruvate = 5-O-(1-carboxyvinyl)-3-phosphoshikimate + phosphate. It participates in metabolic intermediate biosynthesis; chorismate biosynthesis; chorismate from D-erythrose 4-phosphate and phosphoenolpyruvate: step 6/7. Catalyzes the transfer of the enolpyruvyl moiety of phosphoenolpyruvate (PEP) to the 5-hydroxyl of shikimate-3-phosphate (S3P) to produce enolpyruvyl shikimate-3-phosphate and inorganic phosphate. This Clostridium botulinum (strain Eklund 17B / Type B) protein is 3-phosphoshikimate 1-carboxyvinyltransferase.